A 560-amino-acid chain; its full sequence is Protein NRT1/ PTR FAMILY 2.5 (560 aa).

A disordered region spans residues 1–20; the sequence is MADSKSGDTEVAHRSSDPSE. Helical transmembrane passes span 34 to 54, 77 to 97, 101 to 121, 141 to 161, 177 to 197, 207 to 227, 323 to 343, 372 to 392, 404 to 424, 441 to 461, 480 to 500, and 520 to 540; these read TLLG…VFLI, MLPV…PVIS, FISL…YLMP, ILYV…FTLA, FFNW…TAIV, LGFG…IAGV, AILR…PVAV, VIVL…IYPM, LQQV…SAVV, VLWL…HFPA, SLTS…IDVI, and YWVV…CSWF.

This sequence belongs to the major facilitator superfamily. Proton-dependent oligopeptide transporter (POT/PTR) (TC 2.A.17) family. As to expression, expressed in the root epidermis or cortex.

The protein localises to the membrane. In terms of biological role, transporter involved in a passive nitrate efflux. This is Protein NRT1/ PTR FAMILY 2.5 (NPF2.5) from Arabidopsis thaliana (Mouse-ear cress).